Here is a 143-residue protein sequence, read N- to C-terminus: Small ribosomal subunit protein eS19B (143 aa).

It belongs to the eukaryotic ribosomal protein eS19 family. As to quaternary structure, component of the small ribosomal subunit (SSU). Mature yeast ribosomes consist of a small (40S) and a large (60S) subunit. The 40S small subunit contains 1 molecule of ribosomal RNA (18S rRNA) and at least 33 different proteins. The large 60S subunit contains 3 rRNA molecules (25S, 5.8S and 5S rRNA) and at least 46 different proteins.

Its subcellular location is the cytoplasm. The protein localises to the nucleus. Functionally, component of the ribosome, a large ribonucleoprotein complex responsible for the synthesis of proteins in the cell. The small ribosomal subunit (SSU) binds messenger RNAs (mRNAs) and translates the encoded message by selecting cognate aminoacyl-transfer RNA (tRNA) molecules. The large subunit (LSU) contains the ribosomal catalytic site termed the peptidyl transferase center (PTC), which catalyzes the formation of peptide bonds, thereby polymerizing the amino acids delivered by tRNAs into a polypeptide chain. The nascent polypeptides leave the ribosome through a tunnel in the LSU and interact with protein factors that function in enzymatic processing, targeting, and the membrane insertion of nascent chains at the exit of the ribosomal tunnel. eS19 is required for proper maturation of the small (40S) ribosomal subunit. Binds to 40S pre-ribosomal particles, probably required after association of NOC4 but before association of ENP1, TSR1 and RIO2 with 20/21S pre-rRNA. This chain is Small ribosomal subunit protein eS19B (rps1902), found in Schizosaccharomyces pombe (strain 972 / ATCC 24843) (Fission yeast).